A 3255-amino-acid chain; its full sequence is Genome polyprotein (3255 aa).

Positions Val-292–Tyr-437 constitute a Peptidase S30 domain. Residues His-345, Asp-354, and Ser-388 each act as for P1 proteinase activity in the active site. Residues Lys-489 to Cys-492 carry the Involved in interaction with stylet and aphid transmission motif. Positions Pro-747–Lys-749 match the Involved in virions binding and aphid transmission motif. Residues Met-773–Gly-895 form the Peptidase C6 domain. Residues Cys-781 and His-854 each act as for helper component proteinase activity in the active site. Residues Glu-1397 to Glu-1549 form the Helicase ATP-binding domain. Gly-1410 to Ser-1417 provides a ligand contact to ATP. The short motif at Asp-1499–His-1502 is the DECH box element. The Helicase C-terminal domain maps to Asp-1568 to Ser-1727. Positions Glu-2062 to Lys-2069 match the Nuclear localization signal motif. The residue at position 2084 (Tyr-2084) is an O-(5'-phospho-RNA)-tyrosine. In terms of domain architecture, Peptidase C4 spans Ser-2215–Asn-2433. Residues His-2260, Asp-2295, and Cys-2365 each act as for nuclear inclusion protein A activity in the active site. The 125-residue stretch at Trp-2699 to Leu-2823 folds into the RdRp catalytic domain. The tract at residues Thr-2980–Gly-3027 is disordered. Basic and acidic residues predominate over residues Lys-2989–Ile-3005.

It belongs to the potyviridae genome polyprotein family. As to quaternary structure, interacts with host eIF4E protein (via cap-binding region); this interaction mediates the translation of the VPg-viral RNA conjugates. Part of a complex that comprises VPg, RNA, host EIF4E and EIF4G; this interaction mediates the translation of the VPg-viral RNA conjugates. Post-translationally, VPg is uridylylated by the polymerase and is covalently attached to the 5'-end of the genomic RNA. This uridylylated form acts as a nucleotide-peptide primer for the polymerase. Potyviral RNA is expressed as two polyproteins which undergo post-translational proteolytic processing. Genome polyprotein is processed by NIa-pro, P1 and HC-pro proteinases resulting in the production of at least ten individual proteins. P3N-PIPO polyprotein is cleaved by P1 and HC-pro proteinases resulting in the production of three individual proteins. The P1 proteinase and the HC-pro cleave only their respective C-termini autocatalytically. 6K1 is essential for proper proteolytic separation of P3 from CI.

It localises to the host cytoplasmic vesicle. The protein resides in the host nucleus. The protein localises to the virion. It catalyses the reaction RNA(n) + a ribonucleoside 5'-triphosphate = RNA(n+1) + diphosphate. It carries out the reaction Hydrolyzes glutaminyl bonds, and activity is further restricted by preferences for the amino acids in P6 - P1' that vary with the species of potyvirus, e.g. Glu-Xaa-Xaa-Tyr-Xaa-Gln-|-(Ser or Gly) for the enzyme from tobacco etch virus. The natural substrate is the viral polyprotein, but other proteins and oligopeptides containing the appropriate consensus sequence are also cleaved.. The enzyme catalyses Hydrolyzes a Gly-|-Gly bond at its own C-terminus, commonly in the sequence -Tyr-Xaa-Val-Gly-|-Gly, in the processing of the potyviral polyprotein.. In terms of biological role, required for aphid transmission and also has proteolytic activity. Only cleaves a Gly-Gly dipeptide at its own C-terminus. Interacts with virions and aphid stylets. Acts as a suppressor of RNA-mediated gene silencing, also known as post-transcriptional gene silencing (PTGS), a mechanism of plant viral defense that limits the accumulation of viral RNAs. May have RNA-binding activity. Functionally, has helicase activity. It may be involved in replication. Its function is as follows. Indispensable for virus replication. Mediates the cap-independent, EIF4E-dependent translation of viral genomic RNAs. Binds to the cap-binding site of host EIF4E and thus interferes with the host EIF4E-dependent mRNA export and translation. VPg-RNA directly binds EIF4E and is a template for transcription. Also forms trimeric complexes with EIF4E-EIF4G, which are templates for translation. In terms of biological role, has RNA-binding and proteolytic activities. Functionally, an RNA-dependent RNA polymerase that plays an essential role in the virus replication. Its function is as follows. Involved in aphid transmission, cell-to-cell and systemis movement, encapsidation of the viral RNA and in the regulation of viral RNA amplification. The polypeptide is Genome polyprotein (Lettuce mosaic virus (strain E) (LMV)).